Consider the following 198-residue polypeptide: Phosphoheptose isomerase (198 aa).

In terms of domain architecture, SIS spans 36–195; it reads AIEVYQNGNK…EEAIFRNKFV (160 aa). Residue 51 to 53 participates in substrate binding; sequence NGG. The Zn(2+) site is built by His-60 and Glu-64. Substrate-binding positions include Glu-64, 93 to 94, 119 to 121, Ser-124, and Gln-171; these read ND and STS. Zn(2+)-binding residues include Gln-171 and His-179.

Belongs to the SIS family. GmhA subfamily. It depends on Zn(2+) as a cofactor.

It is found in the cytoplasm. It catalyses the reaction 2 D-sedoheptulose 7-phosphate = D-glycero-alpha-D-manno-heptose 7-phosphate + D-glycero-beta-D-manno-heptose 7-phosphate. It participates in carbohydrate biosynthesis; D-glycero-D-manno-heptose 7-phosphate biosynthesis; D-glycero-alpha-D-manno-heptose 7-phosphate and D-glycero-beta-D-manno-heptose 7-phosphate from sedoheptulose 7-phosphate: step 1/1. It functions in the pathway cell surface structure biogenesis; S-layer biogenesis. Its function is as follows. Catalyzes the isomerization of sedoheptulose 7-phosphate in D-glycero-D-manno-heptose 7-phosphate. The polypeptide is Phosphoheptose isomerase (Aneurinibacillus thermoaerophilus).